Reading from the N-terminus, the 126-residue chain is Small ribosomal subunit protein bS6 (126 aa).

Residues Val101 to Glu126 are disordered. Basic and acidic residues predominate over residues Lys104 to Glu126.

This sequence belongs to the bacterial ribosomal protein bS6 family.

Binds together with bS18 to 16S ribosomal RNA. The polypeptide is Small ribosomal subunit protein bS6 (Aliivibrio fischeri (strain ATCC 700601 / ES114) (Vibrio fischeri)).